The primary structure comprises 250 residues: uncharacterized protein (250 aa).

This sequence to class-3 of adenylyl cyclases.

This is an uncharacterized protein from Mycobacterium tuberculosis (strain ATCC 25618 / H37Rv).